We begin with the raw amino-acid sequence, 201 residues long: Cell division protein SepF (201 aa).

A disordered region spans residues 1-94 (MALKDLFSGF…TTSKNNARNV (94 aa)). Residues 13–28 (VEEEDDELEAPPEENE) are compositionally biased toward acidic residues. Positions 35–44 (PKQQAQSQNQ) are enriched in low complexity. Positions 59-88 (SIQSVPKKQSTRLQQSSGERKYQMNNTTSK) are enriched in polar residues.

Belongs to the SepF family. Homodimer. Interacts with FtsZ.

The protein localises to the cytoplasm. Cell division protein that is part of the divisome complex and is recruited early to the Z-ring. Probably stimulates Z-ring formation, perhaps through the cross-linking of FtsZ protofilaments. Its function overlaps with FtsA. This Staphylococcus saprophyticus subsp. saprophyticus (strain ATCC 15305 / DSM 20229 / NCIMB 8711 / NCTC 7292 / S-41) protein is Cell division protein SepF.